Consider the following 1051-residue polypeptide: Putative helicase/primase complex protein (1051 aa).

The protein belongs to the asfivirus F1055L family.

Its function is as follows. May be involved in DNA replication. This is Putative helicase/primase complex protein from Ornithodoros (relapsing fever ticks).